The sequence spans 356 residues: MRVSSSLIALAALAVQALALPVNELAERDTGLDVKLIPIGNTRVKAIITNNADHEMSFVKYNTLFDSSPVRKVQISKDGSIVPFNGMRLYYDINNLPKEAYKTLAPGASAEAEFDIAETSDLSAGGSFEISAEGSIPVIDGQGTKPTGSIRFKANVLTMDIDGEMASKVASAIPELDKRTRVDGQTCTGQYAQLLQGGLRNCVTYAQRAAQAASGGNAQKFQEYFKTTSQQARQSVARRFQAIAQECSSANQGRTIYFCQDIYRNCQRGLIAYTIPARSHVVNCPDYWRLPPVVNRGLDPDHGYVVVHEFTHATSIFSPGTVDHAYGYEQCRRLNAQQSLSNADNYSLFAADVTRN.

The signal sequence occupies residues 1 to 19; the sequence is MRVSSSLIALAALAVQALA. A propeptide spanning residues 20–179 is cleaved from the precursor; that stretch reads LPVNELAERD…ASAIPELDKR (160 aa). 2 disulfides stabilise this stretch: cysteine 187–cysteine 259 and cysteine 266–cysteine 284. Histidine 308 is a binding site for Zn(2+). Residue glutamate 309 is part of the active site. 2 residues coordinate Zn(2+): histidine 312 and aspartate 323.

This sequence belongs to the peptidase M35 family. The cofactor is Zn(2+).

It is found in the secreted. The enzyme catalyses Preferential cleavage of bonds with hydrophobic residues in P1'. Also 3-Asn-|-Gln-4 and 8-Gly-|-Ser-9 bonds in insulin B chain.. In terms of biological role, secreted metalloproteinase that allows assimilation of proteinaceous substrates. Shows high activities on basic nuclear substrates such as histone and protamine. May be involved in virulence. This Coccidioides posadasii (strain C735) (Valley fever fungus) protein is Neutral protease 2 homolog MEP5 (MEP5).